We begin with the raw amino-acid sequence, 220 residues long: MTKGILGRKIGMTQVFGENGELIPVTVVEASQNVVLQKKTEEVDGYNAIQVGFEDKKAYKKDAKSNKYANKPAEGHAKKAGAAPKRFIREFRNVNVDEYEVGQEVTVDTFEAGDIIDVTGTSKGKGFQGAIKRHGQARGPMAHGSHFHRAPGSVGMASDASRVFKGQKMPGRMGGNTVTVQNLEVVQVDTENNVILVKGNVPGPKKGFVEIQTSIKKGNK.

The protein belongs to the universal ribosomal protein uL3 family. Part of the 50S ribosomal subunit. Forms a cluster with proteins L14 and L19.

Functionally, one of the primary rRNA binding proteins, it binds directly near the 3'-end of the 23S rRNA, where it nucleates assembly of the 50S subunit. This Staphylococcus haemolyticus (strain JCSC1435) protein is Large ribosomal subunit protein uL3.